Consider the following 204-residue polypeptide: Methylthioribulose-1-phosphate dehydratase (204 aa).

Positions 94 and 96 each coordinate Zn(2+).

Belongs to the aldolase class II family. MtnB subfamily. Requires Zn(2+) as cofactor.

The catalysed reaction is 5-(methylsulfanyl)-D-ribulose 1-phosphate = 5-methylsulfanyl-2,3-dioxopentyl phosphate + H2O. It functions in the pathway amino-acid biosynthesis; L-methionine biosynthesis via salvage pathway; L-methionine from S-methyl-5-thio-alpha-D-ribose 1-phosphate: step 2/6. Its function is as follows. Catalyzes the dehydration of methylthioribulose-1-phosphate (MTRu-1-P) into 2,3-diketo-5-methylthiopentyl-1-phosphate (DK-MTP-1-P). This chain is Methylthioribulose-1-phosphate dehydratase, found in Cronobacter sakazakii (strain ATCC BAA-894) (Enterobacter sakazakii).